A 440-amino-acid chain; its full sequence is Inner membrane metabolite transport protein YhjE (440 aa).

The Cytoplasmic segment spans residues 1–34 (MQATATTLDHEQEYTPINSRNKVLVASLIGTAIE). A helical membrane pass occupies residues 35-55 (FFDFYIYATAAVIVFPHIFFP). Residues 56 to 66 (QGDPTAATLQS) lie on the Periplasmic side of the membrane. Residues 67–87 (LATFAIAFVARPIGSAVFGHF) form a helical membrane-spanning segment. Topologically, residues 88-108 (GDRVGRKATLVASLLTMGIST) are cytoplasmic. 2 consecutive transmembrane segments (helical) span residues 109–129 (VVIG…LLLA) and 130–150 (LARF…ALLA). The Cytoplasmic portion of the chain corresponds to 151-167 (TENAPPRKRALYGSFPQ). The helical transmembrane segment at 168 to 188 (LGAPIGFFFANGTFLLLSWLL) threads the bilayer. Over 189 to 192 (TDEQ) the chain is Periplasmic. Residues 193–213 (FMSWGWRVPFIFSAVLVIIGL) traverse the membrane as a helical segment. Topologically, residues 214–248 (YVRVSLHESPVFEKVAKAKKQVKIPLGTLLTKHVR) are cytoplasmic. The chain crosses the membrane as a helical span at residues 249-269 (VTVLGTFIMLATYTLFYIMTV). The Periplasmic segment spans residues 270–289 (YSMTFSTAAAPVGLGLPRNE). Residues 290–310 (VLWMLMMAVIGFGVMVPVAGL) form a helical membrane-spanning segment. At 311-320 (LADAFGRRKS) the chain is on the cytoplasmic side. The helical transmembrane segment at 321-341 (MVIITTLIILFALFAFNPLLG) threads the bilayer. Residues 342–345 (SGNP) are Periplasmic-facing. Residues 346-366 (ILVFAFLLLGLSLMGLTFGPM) form a helical membrane-spanning segment. At 367–384 (GALLPELFPTEVRYTGAS) the chain is on the cytoplasmic side. A helical membrane pass occupies residues 385–405 (FSYNVASILGASVAPYIAAWL). Over 406–410 (QTNYG) the chain is Periplasmic. A helical membrane pass occupies residues 411–431 (LGAVGLYLAAMAGLTLIALLL). Over 432–440 (THETRHQSL) the chain is Cytoplasmic.

The protein belongs to the major facilitator superfamily. Metabolite:H+ Symporter (MHS) family (TC 2.A.1.6) family.

It localises to the cell inner membrane. This is Inner membrane metabolite transport protein YhjE (yhjE) from Escherichia coli (strain K12).